The sequence spans 129 residues: Transcription antitermination protein NusB (129 aa).

The protein belongs to the NusB family.

Involved in transcription antitermination. Required for transcription of ribosomal RNA (rRNA) genes. Binds specifically to the boxA antiterminator sequence of the ribosomal RNA (rrn) operons. The chain is Transcription antitermination protein NusB from Staphylococcus epidermidis (strain ATCC 35984 / DSM 28319 / BCRC 17069 / CCUG 31568 / BM 3577 / RP62A).